The chain runs to 408 residues: Cobalt-precorrin-5B C(1)-methyltransferase (408 aa).

It belongs to the CbiD family.

It carries out the reaction Co-precorrin-5B + S-adenosyl-L-methionine = Co-precorrin-6A + S-adenosyl-L-homocysteine. It functions in the pathway cofactor biosynthesis; adenosylcobalamin biosynthesis; cob(II)yrinate a,c-diamide from sirohydrochlorin (anaerobic route): step 6/10. In terms of biological role, catalyzes the methylation of C-1 in cobalt-precorrin-5B to form cobalt-precorrin-6A. In Clostridioides difficile (strain 630) (Peptoclostridium difficile), this protein is Cobalt-precorrin-5B C(1)-methyltransferase.